The chain runs to 183 residues: Capsid protein (183 aa).

Positions 136–183 are disordered; that stretch reads NAPILSTLPETTVVRRRGRSPRRRTPSPRRRRSQSPRRRRSQSPASQC. A compositionally biased stretch (basic residues) spans 149-176; sequence VRRRGRSPRRRTPSPRRRRSQSPRRRRS. Ser155, Ser162, and Ser170 each carry phosphoserine; by host. The stretch at 155–161 is one 1; half-length repeat; the sequence is SPRRRTP. The tract at residues 155–177 is 3 X 8 AA repeats of S-P-R-R-R-[PR]-S-Q; that stretch reads SPRRRTPSPRRRRSQSPRRRRSQ. A Bipartite nuclear localization signal motif is present at residues 158–175; it reads RRTPSPRRRRSQSPRRRR. Repeat copies occupy residues 162 to 169 and 170 to 177. Residues 177–183 form an RNA binding region; the sequence is QSPASQC.

Belongs to the orthohepadnavirus core antigen family. As to quaternary structure, homodimerizes, then multimerizes. Interacts with cytosol exposed regions of viral L glycoprotein present in the reticulum-to-Golgi compartment. Interacts with human FLNB. Phosphorylated form interacts with host importin alpha; this interaction depends on the exposure of the NLS, which itself depends upon genome maturation and/or phosphorylation of the capsid protein. Interacts with host NUP153. In terms of processing, phosphorylated by host SRPK1, SRPK2, and maybe protein kinase C or GAPDH. Phosphorylation is critical for pregenomic RNA packaging. Protein kinase C phosphorylation is stimulated by HBx protein and may play a role in transport of the viral genome to the nucleus at the late step during the viral replication cycle.

It localises to the virion. It is found in the host cytoplasm. In terms of biological role, self assembles to form an icosahedral capsid. Most capsids appear to be large particles with an icosahedral symmetry of T=4 and consist of 240 copies of capsid protein, though a fraction forms smaller T=3 particles consisting of 180 capsid proteins. Entering capsids are transported along microtubules to the nucleus. Phosphorylation of the capsid is thought to induce exposure of nuclear localization signal in the C-terminal portion of the capsid protein that allows binding to the nuclear pore complex via the importin (karyopherin-) alpha and beta. Capsids are imported in intact form through the nuclear pore into the nuclear basket, where it probably binds NUP153. Only capsids that contain the mature viral genome can release the viral DNA and capsid protein into the nucleoplasm. Immature capsids get stuck in the basket. Capsids encapsulate the pre-genomic RNA and the P protein. Pre-genomic RNA is reverse-transcribed into DNA while the capsid is still in the cytoplasm. The capsid can then either be directed to the nucleus, providing more genomes for transcription, or bud through the endoplasmic reticulum to provide new virions. The polypeptide is Capsid protein (Pan troglodytes (Chimpanzee)).